A 436-amino-acid chain; its full sequence is Cytokine receptor-like factor 3 (436 aa).

Residues 9–87 (LMQEAWESID…VSAIEQENIK (79 aa)) are a coiled coil. In terms of domain architecture, Fibronectin type-III spans 177 to 270 (PPVQIEELIE…LQTSRTTLVP (94 aa)).

This sequence belongs to the cytokine receptor-like factor 3 family.

It is found in the cytoplasm. Its function is as follows. May play a role in the negative regulation of cell cycle progression. The polypeptide is Cytokine receptor-like factor 3 (crlf3) (Xenopus laevis (African clawed frog)).